The primary structure comprises 328 residues: DNA-directed RNA polymerase subunit alpha (328 aa).

Residues 1 to 231 are alpha N-terminal domain (alpha-NTD); the sequence is MQTNLLKPKA…EQLAVFAQLE (231 aa). The segment at 248–328 is alpha C-terminal domain (alpha-CTD); that stretch reads FDPILLRPVD…NWPPQGLDKR (81 aa).

Belongs to the RNA polymerase alpha chain family. Homodimer. The RNAP catalytic core consists of 2 alpha, 1 beta, 1 beta' and 1 omega subunit. When a sigma factor is associated with the core the holoenzyme is formed, which can initiate transcription.

The enzyme catalyses RNA(n) + a ribonucleoside 5'-triphosphate = RNA(n+1) + diphosphate. DNA-dependent RNA polymerase catalyzes the transcription of DNA into RNA using the four ribonucleoside triphosphates as substrates. The sequence is that of DNA-directed RNA polymerase subunit alpha from Leptothrix cholodnii (strain ATCC 51168 / LMG 8142 / SP-6) (Leptothrix discophora (strain SP-6)).